The primary structure comprises 149 residues: Histone H2A (149 aa).

Basic residues predominate over residues 1–23 (METAGKAKKGFGGRKGGPRKKSV). 2 disordered regions span residues 1–25 (META…SVTR) and 127–149 (KTAE…PKKA). The segment covering 127–138 (KTAEKAAKEPKS) has biased composition (basic and acidic residues). 2 consecutive short sequence motifs (SPKK motif) follow at residues 138–141 (SPSK) and 145–148 (SPKK).

The protein belongs to the histone H2A family. The nucleosome is a histone octamer containing two molecules each of H2A, H2B, H3 and H4 assembled in one H3-H4 heterotetramer and two H2A-H2B heterodimers. The octamer wraps approximately 147 bp of DNA.

It localises to the nucleus. The protein localises to the chromosome. In terms of biological role, core component of nucleosome. Nucleosomes wrap and compact DNA into chromatin, limiting DNA accessibility to the cellular machineries which require DNA as a template. Histones thereby play a central role in transcription regulation, DNA repair, DNA replication and chromosomal stability. DNA accessibility is regulated via a complex set of post-translational modifications of histones, also called histone code, and nucleosome remodeling. This Petroselinum crispum (Parsley) protein is Histone H2A.